Here is a 382-residue protein sequence, read N- to C-terminus: ATP phosphoribosyltransferase regulatory subunit (382 aa).

The protein belongs to the class-II aminoacyl-tRNA synthetase family. HisZ subfamily. In terms of assembly, heteromultimer composed of HisG and HisZ subunits.

It localises to the cytoplasm. The protein operates within amino-acid biosynthesis; L-histidine biosynthesis; L-histidine from 5-phospho-alpha-D-ribose 1-diphosphate: step 1/9. In terms of biological role, required for the first step of histidine biosynthesis. May allow the feedback regulation of ATP phosphoribosyltransferase activity by histidine. The chain is ATP phosphoribosyltransferase regulatory subunit from Burkholderia pseudomallei (strain K96243).